Reading from the N-terminus, the 261-residue chain is MFGSDNRADYDNGFPWHPHRGIETITYQIKGKTFHEDSEGHRGIIAPGEIQWMTAGSGIFHEEMPKPIYYGEENKYRERNDSNAGIQLWLNMPASSKMADPAYRSIRSDQIPQISDDYGNRIRIVAGTVNRVSGALNENFQYDLMQRIDPYYVEILMEPDTRTSLSVPEGHRAIMAIVEGSIRVNGSTFNEKNVAVLSKEGTDIFIDSQANSRLIFLAGKPLNEPIAWYGPIVMNTRDQLIQAFNELQEGKFVKNRNPVWQ.

Positions 17, 19, 61, and 63 each coordinate a divalent metal cation.

Belongs to the pirin family. Requires a divalent metal cation as cofactor.

The enzyme catalyses quercetin + O2 = 2-(3,4-dihydroxybenzoyloxy)-4,6-dihydroxybenzoate + CO. It participates in flavonoid metabolism; quercetin degradation. In terms of biological role, putative quercetin 2,3-dioxygenase. This chain is Putative quercetin 2,3-dioxygenase Ta0133, found in Thermoplasma acidophilum (strain ATCC 25905 / DSM 1728 / JCM 9062 / NBRC 15155 / AMRC-C165).